Here is a 204-residue protein sequence, read N- to C-terminus: Cell wall protein RHD3 (204 aa).

Positions methionine 1–alanine 15 are cleaved as a signal peptide. A lipid anchor (GPI-anchor amidated glycine) is attached at glycine 182. Residues alanine 183 to methionine 204 constitute a propeptide, removed in mature form.

This sequence belongs to the SRP1/TIP1 family. Post-translationally, the GPI-anchor is attached to the protein in the endoplasmic reticulum and serves to target the protein to the cell surface. There, the glucosamine-inositol phospholipid moiety is cleaved off and the GPI-modified mannoprotein is covalently attached via its lipidless GPI glycan remnant to the 1,6-beta-glucan of the outer cell wall layer. In terms of processing, O-glycosylated by PMT1.

The protein localises to the secreted. The protein resides in the cell wall. Its subcellular location is the membrane. Component of the cell wall involved in virulence. Does not seem to have a major role in maintaining cell wall integrity but plays a role in the relationship between C.albicans and the host. The protein is Cell wall protein RHD3 (RHD3) of Candida albicans (strain SC5314 / ATCC MYA-2876) (Yeast).